The following is a 434-amino-acid chain: ATP phosphoribosyltransferase regulatory subunit (434 aa).

It belongs to the class-II aminoacyl-tRNA synthetase family. HisZ subfamily. In terms of assembly, heteromultimer composed of HisG and HisZ subunits.

Its subcellular location is the cytoplasm. It functions in the pathway amino-acid biosynthesis; L-histidine biosynthesis; L-histidine from 5-phospho-alpha-D-ribose 1-diphosphate: step 1/9. Functionally, required for the first step of histidine biosynthesis. May allow the feedback regulation of ATP phosphoribosyltransferase activity by histidine. This Geobacter metallireducens (strain ATCC 53774 / DSM 7210 / GS-15) protein is ATP phosphoribosyltransferase regulatory subunit.